Reading from the N-terminus, the 361-residue chain is Methyltransferase LUC1 (361 aa).

Positions 18, 66, 89, 126, and 127 each coordinate S-adenosyl-L-homocysteine. Mg(2+)-binding residues include Gln-156 and Phe-233.

It belongs to the methyltransferase superfamily. Type-7 methyltransferase family. It depends on Mg(2+) as a cofactor.

It functions in the pathway mycotoxin biosynthesis. In terms of biological role, methyltransferase; part of the gene cluster that mediates the biosynthesis of the mycotoxin lucilactaene and the lucilactaene-related compound NG-391 that act as cell cycle inhibitors with potent growth inhibitory activity against malarial parasites, moderate growth inhibitory activity against cancer cells, and no activity against bacteria and fungi. LUC1 performs the last step of the pathway and methylates the hydroxyl group of demethyllucilactaene at C-21 to yeald lucilactaene. The pathway begins with the hybrid PKS-NRPS synthetase LUC5 which is responsible for the condensation of one acetyl-coenzyme A (CoA) unit with six malonyl-CoA units and the amide linkage of the arising heptaketide and homoserine, subsequently releasing the first intermediate prelucilactaene B. Both the cytochrome P450 monooxygenase LUC2 and the hydrolase LUC6 function in parallel in modification of prelucilactaene B. LUC6 may catalyze the 2-pyrrolidone ring formation to form prelucilactaene C from prelucilactaene B, followed by C-15 hydroxylation by the same enzyme to give prelucilactaene D, which is then converted to prelucilactaene E by epoxidation, and finally to prelucilactaene F by cyclization. Prelucilactane D, prelucilactaene E, and prelucilactaene F can be converted to dihydrolucilactaene, NG391, and lucilactaene, respectively, via C-20 methyl group hydroxylation by the cytochrome P450 monooxygenase LUC2. However, LUC2, unlike FUS8 in fusarin C biosynthesis, is not enough for the full oxidation of the C-20 methyl group into carboxylic acid, which is a prerequisite for the final methylation step. The aldehyde dehydrogenase LUC3 is involved in the biosynthesis by further oxidation of the C-20 alcoholic analog prelucilactaene G into a carboxylic derivative. This unidentified carboxylic derivative may be converted to demethyllucilactaene. As the last step, the methyltransferase LUC1 methylates the hydroxyl group at C-21 of demethyllucilactaene to generate lucilactaene. This Fusarium sp protein is Methyltransferase LUC1.